Here is a 639-residue protein sequence, read N- to C-terminus: 1-deoxy-D-xylulose-5-phosphate synthase (639 aa).

Thiamine diphosphate-binding positions include histidine 76 and 117–119 (AHS). Position 148 (aspartate 148) interacts with Mg(2+). Thiamine diphosphate is bound by residues 149–150 (GS), asparagine 181, tyrosine 288, and glutamate 370. Asparagine 181 is a binding site for Mg(2+).

The protein belongs to the transketolase family. DXPS subfamily. As to quaternary structure, homodimer. The cofactor is Mg(2+). Thiamine diphosphate is required as a cofactor.

It carries out the reaction D-glyceraldehyde 3-phosphate + pyruvate + H(+) = 1-deoxy-D-xylulose 5-phosphate + CO2. It functions in the pathway metabolic intermediate biosynthesis; 1-deoxy-D-xylulose 5-phosphate biosynthesis; 1-deoxy-D-xylulose 5-phosphate from D-glyceraldehyde 3-phosphate and pyruvate: step 1/1. Catalyzes the acyloin condensation reaction between C atoms 2 and 3 of pyruvate and glyceraldehyde 3-phosphate to yield 1-deoxy-D-xylulose-5-phosphate (DXP). This chain is 1-deoxy-D-xylulose-5-phosphate synthase, found in Leptothrix cholodnii (strain ATCC 51168 / LMG 8142 / SP-6) (Leptothrix discophora (strain SP-6)).